Reading from the N-terminus, the 280-residue chain is Pyridoxal 5'-phosphate synthase subunit PdxS (280 aa).

Aspartate 12 is a binding site for D-ribose 5-phosphate. Catalysis depends on lysine 69, which acts as the Schiff-base intermediate with D-ribose 5-phosphate. Glycine 141 contributes to the D-ribose 5-phosphate binding site. Arginine 153 is a D-glyceraldehyde 3-phosphate binding site. D-ribose 5-phosphate contacts are provided by residues glycine 202 and glycine 223–serine 224.

It belongs to the PdxS/SNZ family. As to quaternary structure, in the presence of PdxT, forms a dodecamer of heterodimers.

It catalyses the reaction aldehydo-D-ribose 5-phosphate + D-glyceraldehyde 3-phosphate + L-glutamine = pyridoxal 5'-phosphate + L-glutamate + phosphate + 3 H2O + H(+). It participates in cofactor biosynthesis; pyridoxal 5'-phosphate biosynthesis. In terms of biological role, catalyzes the formation of pyridoxal 5'-phosphate from ribose 5-phosphate (RBP), glyceraldehyde 3-phosphate (G3P) and ammonia. The ammonia is provided by the PdxT subunit. Can also use ribulose 5-phosphate and dihydroxyacetone phosphate as substrates, resulting from enzyme-catalyzed isomerization of RBP and G3P, respectively. The chain is Pyridoxal 5'-phosphate synthase subunit PdxS from Fusobacterium nucleatum subsp. nucleatum (strain ATCC 25586 / DSM 15643 / BCRC 10681 / CIP 101130 / JCM 8532 / KCTC 2640 / LMG 13131 / VPI 4355).